A 584-amino-acid chain; its full sequence is A-type ATP synthase subunit A (584 aa).

234–241 is a binding site for ATP; sequence GPFGSGKT.

This sequence belongs to the ATPase alpha/beta chains family. Has multiple subunits with at least A(3), B(3), C, D, E, F, H, I and proteolipid K(x).

It localises to the cell membrane. It catalyses the reaction ATP + H2O + 4 H(+)(in) = ADP + phosphate + 5 H(+)(out). Its function is as follows. Component of the A-type ATP synthase that produces ATP from ADP in the presence of a proton gradient across the membrane. The A chain is the catalytic subunit. The chain is A-type ATP synthase subunit A from Methanoculleus marisnigri (strain ATCC 35101 / DSM 1498 / JR1).